Consider the following 1357-residue polypeptide: DNA-directed RNA polymerase subunit beta (1357 aa).

It belongs to the RNA polymerase beta chain family. As to quaternary structure, the RNAP catalytic core consists of 2 alpha, 1 beta, 1 beta' and 1 omega subunit. When a sigma factor is associated with the core the holoenzyme is formed, which can initiate transcription.

The enzyme catalyses RNA(n) + a ribonucleoside 5'-triphosphate = RNA(n+1) + diphosphate. DNA-dependent RNA polymerase catalyzes the transcription of DNA into RNA using the four ribonucleoside triphosphates as substrates. This is DNA-directed RNA polymerase subunit beta from Pseudomonas putida (strain ATCC 700007 / DSM 6899 / JCM 31910 / BCRC 17059 / LMG 24140 / F1).